Consider the following 187-residue polypeptide: Resolvase OPG149 (187 aa).

It belongs to the RuvC family. Poxviruses-type subfamily. Mg(2+) is required as a cofactor.

Plays a role in DNA replication by cleaving viral DNA concatamers to yield unit-length viral genomes. The concatamer junctions contain inverted repeat sequences that can be extruded as cruciforms, yielding Holliday junctions that A22 protein cleaves. This is Resolvase OPG149 (OPG149) from Cynomys gunnisoni (Gunnison's prairie dog).